The chain runs to 243 residues: Chromosome partition protein MukE (243 aa).

Residues 223-243 (LMENDTKSADEIDEEFDGEQE) are disordered. Over residues 233–243 (EIDEEFDGEQE) the composition is skewed to acidic residues.

Belongs to the MukE family. In terms of assembly, interacts, and probably forms a ternary complex, with MukF and MukB. The complex formation is stimulated by calcium or magnesium.

It localises to the cytoplasm. The protein localises to the nucleoid. Functionally, involved in chromosome condensation, segregation and cell cycle progression. May participate in facilitating chromosome segregation by condensation DNA from both sides of a centrally located replisome during cell division. Probably acts via its interaction with MukB and MukF. The protein is Chromosome partition protein MukE of Haemophilus influenzae (strain ATCC 51907 / DSM 11121 / KW20 / Rd).